Consider the following 185-residue polypeptide: Translation initiation factor IF-3 (185 aa).

It belongs to the IF-3 family. Monomer.

Its subcellular location is the cytoplasm. IF-3 binds to the 30S ribosomal subunit and shifts the equilibrium between 70S ribosomes and their 50S and 30S subunits in favor of the free subunits, thus enhancing the availability of 30S subunits on which protein synthesis initiation begins. The chain is Translation initiation factor IF-3 from Streptococcus pneumoniae (strain Hungary19A-6).